The following is a 1460-amino-acid chain: CLIP-associating protein 1-A (1460 aa).

HEAT repeat units follow at residues 87–124 and 163–200; these read TQLG…QASN and LTLS…HVGE. A disordered region spans residues 237–293; sequence SDKNFDDEDSVDGNRPSSASSSASSKAPQTARRGVSLGTARRPGPSSAAAKTGGTAK. The span at 279–293 shows a compositional bias: low complexity; sequence PGPSSAAAKTGGTAK. 2 HEAT repeats span residues 407-442 and 443-479; these read HGAE…IRHT and HVPR…EWQT. Disordered stretches follow at residues 545–605, 640–733, and 778–800; these read SDSI…IDVN, IRTR…RFGI, and PYGM…ERSY. Residues 550-569 show a composition bias toward low complexity; that stretch reads SLPQSDRSSSSSQESLNRPL. Residues 571–597 show a composition bias toward polar residues; sequence TKRSPTGSTVSRASSTTSKSTPGSLQR. Positions 645–659 are enriched in low complexity; it reads QSSGSTTSTASTPAD. 2 stretches are compositionally biased toward polar residues: residues 669–681 and 715–724; these read VSQS…SNSP and QGCSRETSPS. Over residues 789–800 the composition is skewed to low complexity; sequence SDASSACSERSY. The stretch at 942–979 is one HEAT 5 repeat; it reads FIVDQTQTPNLKVKVAILKYIESLARQMDPTDFVNSSE. The interval 1041 to 1084 is disordered; the sequence is LKNSSNSSMGSPSNTIGRTPSRHSSSRASPLTSPTNCSHGGLSP. Residues 1042-1054 are compositionally biased toward low complexity; the sequence is KNSSNSSMGSPSN. A compositionally biased stretch (polar residues) spans 1066-1078; it reads SRASPLTSPTNCS. HEAT repeat units follow at residues 1272–1309 and 1390–1427; these read LLLE…YAEL and GLLQ…YLAQ.

It belongs to the CLASP family.

It localises to the cytoplasm. The protein localises to the cytoskeleton. Its subcellular location is the microtubule organizing center. The protein resides in the centrosome. It is found in the chromosome. It localises to the centromere. The protein localises to the kinetochore. Its subcellular location is the spindle. The protein resides in the golgi apparatus. It is found in the trans-Golgi network. Functionally, microtubule plus-end tracking protein that promotes the stabilization of dynamic microtubules during anaphase. Plays a crucial role in chromatin-induced microtubule formation. May also act at microtubule minus ends. May be involved in the nucleation of noncentrosomal microtubules originating from the trans-Golgi network (TGN). The chain is CLIP-associating protein 1-A (clasp1-a) from Xenopus laevis (African clawed frog).